The primary structure comprises 217 residues: Ribosomal RNA small subunit methyltransferase G (217 aa).

S-adenosyl-L-methionine contacts are provided by residues glycine 79, leucine 84, 130 to 131 (IE), and arginine 145.

This sequence belongs to the methyltransferase superfamily. RNA methyltransferase RsmG family.

The protein localises to the cytoplasm. It catalyses the reaction guanosine(527) in 16S rRNA + S-adenosyl-L-methionine = N(7)-methylguanosine(527) in 16S rRNA + S-adenosyl-L-homocysteine. In terms of biological role, specifically methylates the N7 position of guanine in position 527 of 16S rRNA. The chain is Ribosomal RNA small subunit methyltransferase G from Hahella chejuensis (strain KCTC 2396).